Reading from the N-terminus, the 269-residue chain is Type III pantothenate kinase (269 aa).

9-16 (DVGNTSVK) is an ATP binding site. Substrate-binding positions include Tyr106 and 113-116 (GADR). Asp115 (proton acceptor) is an active-site residue. Asp137 provides a ligand contact to K(+). Position 140 (Thr140) interacts with ATP. Residue Thr193 coordinates substrate.

This sequence belongs to the type III pantothenate kinase family. As to quaternary structure, homodimer. The cofactor is NH4(+). K(+) is required as a cofactor.

Its subcellular location is the cytoplasm. The catalysed reaction is (R)-pantothenate + ATP = (R)-4'-phosphopantothenate + ADP + H(+). It participates in cofactor biosynthesis; coenzyme A biosynthesis; CoA from (R)-pantothenate: step 1/5. Functionally, catalyzes the phosphorylation of pantothenate (Pan), the first step in CoA biosynthesis. The sequence is that of Type III pantothenate kinase from Lawsonia intracellularis (strain PHE/MN1-00).